The sequence spans 162 residues: Protein A49R (162 aa).

It belongs to the poxviridae A49 protein family. As to quaternary structure, interacts with host BTRC; this interaction inhibits NF-kappa-B activation.

The protein localises to the host cytoplasm. The protein resides in the host nucleus. Its function is as follows. Plays a role in the inhibition of host NF-kappa-B activation. Interacts with host BTRC and thereby diminishes ubiquitination of NF-kappa-B inhibitor alpha/NFKBIA. This stabilizes NFKBIA and its interaction with NF-kappaB, so retaining p65/RELA in the cytoplasm and preventing NF-kappa-B-dependent gene expression. In Bos taurus (Bovine), this protein is Protein A49R.